We begin with the raw amino-acid sequence, 335 residues long: Cytoskeleton protein RodZ (335 aa).

The Cytoplasmic segment spans residues 1 to 111 (MNTEATHDQN…LGKRRKKRDG (111 aa)). The HTH cro/C1-type domain maps to 19–71 (LRNAREQLGLSQQAVAERLCLKVSTVRDIEEDKAPADLASTFLRGYIRSYARL). The H-T-H motif DNA-binding region spans 30-49 (QQAVAERLCLKVSTVRDIEE). Residues 112–132 (WLMTFTWLVLFVVIGLSGAWW) form a helical; Signal-anchor for type II membrane protein membrane-spanning segment. At 133-335 (WQDHKAQQEE…TLNAEQSPAQ (203 aa)) the chain is on the periplasmic side. The span at 148–164 (DQSSAELNNNQSQSVPL) shows a compositional bias: polar residues. The disordered stretch occupies residues 148–239 (DQSSAELNNN…PDGAAPLPTD (92 aa)). Composition is skewed to low complexity over residues 165–205 (DTST…DPQQ) and 217–239 (DTAA…LPTD).

It belongs to the RodZ family.

The protein localises to the cell inner membrane. In terms of biological role, cytoskeletal protein that is involved in cell-shape control through regulation of the length of the long axis. This Escherichia coli O6:K15:H31 (strain 536 / UPEC) protein is Cytoskeleton protein RodZ.